A 544-amino-acid chain; its full sequence is Apolipoprotein N-acyltransferase 1 (544 aa).

6 helical membrane-spanning segments follow: residues 30–50 (LNLN…FLLL), 57–79 (FSFL…WIIF), 91–111 (KYCI…SYFS), 115–135 (FIFQ…GFLG), 157–177 (IFGV…SASF), and 197–217 (PMMI…FTKI). The 277-residue stretch at 225–501 (ARIALVQPNR…KDILVADVTV (277 aa)) folds into the CN hydrolase domain. E272 serves as the catalytic Proton acceptor. Residue K360 is part of the active site. C412 acts as the Nucleophile in catalysis. Residues 514–534 (GDFFGVLCTIVLILNLCFIII) form a helical membrane-spanning segment.

This sequence belongs to the CN hydrolase family. Apolipoprotein N-acyltransferase subfamily.

It is found in the cell inner membrane. The catalysed reaction is N-terminal S-1,2-diacyl-sn-glyceryl-L-cysteinyl-[lipoprotein] + a glycerophospholipid = N-acyl-S-1,2-diacyl-sn-glyceryl-L-cysteinyl-[lipoprotein] + a 2-acyl-sn-glycero-3-phospholipid + H(+). Its pathway is protein modification; lipoprotein biosynthesis (N-acyl transfer). Functionally, catalyzes the phospholipid dependent N-acylation of the N-terminal cysteine of apolipoprotein, the last step in lipoprotein maturation. The chain is Apolipoprotein N-acyltransferase 1 from Treponema denticola (strain ATCC 35405 / DSM 14222 / CIP 103919 / JCM 8153 / KCTC 15104).